A 292-amino-acid polypeptide reads, in one-letter code: Probable endonuclease 4 (292 aa).

9 residues coordinate Zn(2+): H71, H111, E148, D182, H185, H217, D230, H232, and E262.

The protein belongs to the AP endonuclease 2 family. Zn(2+) serves as cofactor.

The enzyme catalyses Endonucleolytic cleavage to 5'-phosphooligonucleotide end-products.. Endonuclease IV plays a role in DNA repair. It cleaves phosphodiester bonds at apurinic or apyrimidinic (AP) sites, generating a 3'-hydroxyl group and a 5'-terminal sugar phosphate. This Aster yellows witches'-broom phytoplasma (strain AYWB) protein is Probable endonuclease 4.